A 402-amino-acid polypeptide reads, in one-letter code: ORC1-type DNA replication protein 17 (402 aa).

ATP is bound by residues Tyr-223 and Arg-235.

This sequence belongs to the CDC6/cdc18 family.

Involved in regulation of DNA replication. The sequence is that of ORC1-type DNA replication protein 17 (cdc6q) from Haloarcula marismortui (strain ATCC 43049 / DSM 3752 / JCM 8966 / VKM B-1809) (Halobacterium marismortui).